The following is a 174-amino-acid chain: CEN-like protein 1 (174 aa).

It belongs to the phosphatidylethanolamine-binding protein family. In terms of tissue distribution, expressed in vegetative axillary meristems but not in the main shoot meristem.

The protein resides in the cytoplasm. May form complexes with phosphorylated ligands by interfering with kinases and their effectors. This Nicotiana tabacum (Common tobacco) protein is CEN-like protein 1 (CET1).